The chain runs to 142 residues: Peptide methionine sulfoxide reductase MsrB (142 aa).

The MsrB domain occupies 13–135; sequence EKDWKVELSE…NSLSMTFKGE (123 aa). Residues cysteine 52, cysteine 55, cysteine 101, and cysteine 104 each contribute to the Zn(2+) site. Cysteine 124 functions as the Nucleophile in the catalytic mechanism.

It belongs to the MsrB Met sulfoxide reductase family. It depends on Zn(2+) as a cofactor.

The catalysed reaction is L-methionyl-[protein] + [thioredoxin]-disulfide + H2O = L-methionyl-(R)-S-oxide-[protein] + [thioredoxin]-dithiol. This is Peptide methionine sulfoxide reductase MsrB from Alteromonas mediterranea (strain DSM 17117 / CIP 110805 / LMG 28347 / Deep ecotype).